The primary structure comprises 25 residues: Ocellatin-L2 (25 aa).

Position 25 is a leucine amide (Leu-25).

The protein belongs to the frog skin active peptide (FSAP) family. Ocellatin subfamily. As to expression, expressed by the skin glands.

It localises to the secreted. In terms of biological role, shows a low activity in stimulating insulin release from rat BRIN-BD11 beta cells, and acts without loss of integrity of the plasma membrane. Does not show antibacterial (E.coli and S.aureus). Does not show hemolytic activity against human erythrocytes. In Leptodactylus laticeps (Santa Fe frog), this protein is Ocellatin-L2.